Here is an 853-residue protein sequence, read N- to C-terminus: Transcription factor macR (853 aa).

The segment at residues 18–45 (CIVCRRRKVRCGREQPECANCVRMKENC) is a DNA-binding region (zn(2)-C6 fungal-type). Disordered regions lie at residues 54–122 (ESTG…PYPT), 138–166 (ANAPQINGSSTTTRDPSPAPSTSLFPTPS), 734–775 (ASDL…AGNK), and 833–853 (LGSQSTASGRRGLPDGLDFPG). 3 stretches are compositionally biased toward polar residues: residues 104 to 116 (PQVSANASPSPQR), 141 to 163 (PQINGSSTTTRDPSPAPSTSLFP), and 738 to 752 (RATSDQPSSDVSSTT).

It is found in the nucleus. Its function is as follows. Transcription factor that regulates the expression of the gene cluster that mediates the biosynthesis of macrophorins, isoprenoid epoxycyclohexenones containing cyclized drimane moieties. This is Transcription factor macR from Penicillium terrestre.